The primary structure comprises 136 residues: Gonadotropin subunit beta-2 (136 aa).

A signal peptide spans 1–21 (MVCLFLGASSFIWSLAPAAAA). 6 disulfides stabilise this stretch: Cys-27-Cys-75, Cys-41-Cys-90, Cys-44-Cys-128, Cys-52-Cys-106, Cys-56-Cys-108, and Cys-111-Cys-118. N-linked (GlcNAc...) asparagine glycosylation occurs at Asn-31.

It belongs to the glycoprotein hormones subunit beta family. In terms of assembly, heterodimer of an alpha and a beta chain.

It is found in the secreted. In terms of biological role, involved in gametogenesis and steroidogenesis. This is Gonadotropin subunit beta-2 (cgbb) from Fundulus heteroclitus (Killifish).